A 332-amino-acid chain; its full sequence is Protein FAM9A (332 aa).

The span at 1–13 (MEPVGRKRSRKAA) shows a compositional bias: basic residues. Disordered regions lie at residues 1–114 (MEPV…EHTG) and 186–293 (QKDD…PTGV). 2 stretches are compositionally biased toward basic and acidic residues: residues 74–91 (GKDP…FTET) and 98–114 (DEHG…EHTG). The span at 196-217 (AAAAAAEAAAAAEAAAAAAEVI) shows a compositional bias: low complexity. Positions 218–275 (VVEDEEEEEKEEEEEKEEEEEEGEEEGGGEEGEEGGGGGEGEETEEEEEEEEEEEEEE) are enriched in acidic residues. A compositionally biased stretch (basic and acidic residues) spans 276–285 (QIKAFQEKQK).

Belongs to the XLR/SYCP3 family. In terms of tissue distribution, expressed exclusively in testis.

It is found in the nucleus. The protein resides in the nucleolus. This Homo sapiens (Human) protein is Protein FAM9A.